The sequence spans 862 residues: Protein kintoun (862 aa).

Disordered regions lie at residues 208-229, 564-602, 626-670, and 743-854; these read KLLP…RTTK, TKRE…KKER, GEGA…STMP, and RREV…QFKS. A compositionally biased stretch (basic and acidic residues) spans 564-586; that stretch reads TKREEHGEPECDEKDGSEAEKAR. Residues 587 to 601 show a composition bias toward basic residues; that stretch reads TLQKAKRNSRKKKKE. Basic and acidic residues-rich tracts occupy residues 748–757 and 766–785; these read RRADARRMSE and KDAH…HDEK.

The protein belongs to the PIH1 family. Kintoun subfamily.

Its subcellular location is the cytoplasm. Required for cytoplasmic pre-assembly of axonemal dyneins, thereby playing a central role in motility in cilia and flagella. Involved in pre-assembly of dynein arm complexes in the cytoplasm before intraflagellar transport loads them for the ciliary compartment. This is Protein kintoun from Anopheles gambiae (African malaria mosquito).